The following is a 416-amino-acid chain: MLLSVPLLLGLLGLAAADPAIYFKEQFLDGDAWTNRWVESKHKSDFGKFVLSSGKFYGDQEKDKGLQTSQDARFYALSARFEPFSNKGQTLVVQFTVKHEQNIDCGGGYVKLFPGGLDQKDMHGDSEYNIMFGPDICGPGTKKVHVIFNYKGKNVLINKDIRCKDDEFTHLYTLIVRPDNTYEVKIDNSQVESGSLEDDWDFLPPKKIKDPDAAKPEDWDERAKIDDPTDSKPEDWDKPEHIPDPDAKKPEDWDEEMDGEWEPPVIQNPEYKGEWKPRQIDNPDYKGTWIHPEIDNPEYSPDANIYAYDSFAVLGLDLWQVKSGTIFDNFLITNDEAYAEEFGNETWGVTKAAEKQMKDKQDEEQRLKEEEEDKKRKEEEEAEDKEDEDDRDEDEDEEDEKEEDEEDATGQAKDEL.

The N-terminal stretch at 1–17 (MLLSVPLLLGLLGLAAA) is a signal peptide. Residues 18–197 (DPAIYFKEQF…NSQVESGSLE (180 aa)) are N-domain. Gln-26 is a Ca(2+) binding site. Lys-48 carries the N6-acetyllysine modification. 2 residues coordinate Ca(2+): Lys-62 and Lys-64. Lys-64 is subject to N6-(2-hydroxyisobutyryl)lysine. An intrachain disulfide couples Cys-105 to Cys-137. An alpha-D-glucoside is bound by residues Tyr-109, Lys-111, Tyr-128, and Asp-135. Residue Lys-159 is modified to N6-acetyllysine. A 1-1 repeat occupies 191–202 (VESGSLEDDWDF). Positions 191–255 (VESGSLEDDW…DAKKPEDWDE (65 aa)) are 4 X approximate repeats. The tract at residues 193–277 (SGSLEDDWDF…NPEYKGEWKP (85 aa)) is disordered. The interval 198–308 (DDWDFLPPKK…YSPDANIYAY (111 aa)) is P-domain. Residues 207-251 (KIKDPDAAKPEDWDERAKIDDPTDSKPEDWDKPEHIPDPDAKKPE) show a composition bias toward basic and acidic residues. Lys-209 carries the N6-acetyllysine modification. Repeat copies occupy residues 210–221 (DPDAAKPEDWDE), 227–238 (DPTDSKPEDWDK), 244–255 (DPDAKKPEDWDE), 259–269 (GEWEPPVIQNP), 273–283 (GEWKPRQIDNP), and 287–297 (GTWIHPEIDNP). Residues 237–270 (DKPEHIPDPDAKKPEDWDEEMDGEWEPPVIQNPE) form an interaction with PPIB region. Positions 252–261 (DWDEEMDGEW) are enriched in acidic residues. The tract at residues 259–297 (GEWEPPVIQNPEYKGEWKPRQIDNPDYKGTWIHPEIDNP) is 3 X approximate repeats. The segment at 309–416 (DSFAVLGLDL…DATGQAKDEL (108 aa)) is C-domain. Asp-317 contributes to the an alpha-D-glucoside binding site. Asp-328 contacts Ca(2+). Residues 350–416 (TKAAEKQMKD…DATGQAKDEL (67 aa)) form a disordered region. A compositionally biased stretch (basic and acidic residues) spans 352–379 (AAEKQMKDKQDEEQRLKEEEEDKKRKEE). The span at 380 to 408 (EEAEDKEDEDDRDEDEDEEDEKEEDEEDA) shows a compositional bias: acidic residues. Residues 413-416 (KDEL) carry the Prevents secretion from ER motif.

The protein belongs to the calreticulin family. In terms of assembly, monomer. Component of an EIF2 complex at least composed of CELF1/CUGBP1, CALR, CALR3, EIF2S1, EIF2S2, HSP90B1 and HSPA5. Interacts with GABARAP, NR3C1 and TRIM21. Interacts with PPIB and SPACA9. Interacts (via P-domain) with PDIA5. Interacts with PDIA3/ERp57. Interacts with CLCC1. Predentin and odontoblast.

The protein resides in the endoplasmic reticulum lumen. The protein localises to the cytoplasm. It is found in the cytosol. Its subcellular location is the secreted. It localises to the extracellular space. The protein resides in the extracellular matrix. The protein localises to the cell surface. It is found in the sarcoplasmic reticulum lumen. Its subcellular location is the cytoplasmic vesicle. It localises to the secretory vesicle. The protein resides in the cortical granule. The protein localises to the cytolytic granule. Functionally, calcium-binding chaperone that promotes folding, oligomeric assembly and quality control in the endoplasmic reticulum (ER) via the calreticulin/calnexin cycle. This lectin interacts transiently with almost all of the monoglucosylated glycoproteins that are synthesized in the ER. Interacts with the DNA-binding domain of NR3C1 and mediates its nuclear export. Involved in maternal gene expression regulation. May participate in oocyte maturation via the regulation of calcium homeostasis. Present in the cortical granules of non-activated oocytes, is exocytosed during the cortical reaction in response to oocyte activation and might participate in the block to polyspermy. This Rattus norvegicus (Rat) protein is Calreticulin (Calr).